Consider the following 590-residue polypeptide: Synaptotagmin-3 (590 aa).

Residues 1-54 (MSGDYEDDLCRRALILVSDLCARVRDADTNDRCQEFNDRIRGYPRGPDADISVS) are Vesicular-facing. The tract at residues 10–34 (CRRALILVSDLCARVRDADTNDRCQ) is cysteine motif. A helical transmembrane segment spans residues 55-75 (LLSVIVTFCGIVLLGVSLFVS). Residues 76–590 (WKLCWVPWRD…KGLSEKENSE (515 aa)) are Cytoplasmic-facing. Disordered regions lie at residues 143–220 (AELL…VTSL), 234–260 (TQQTLTSQPDPSSEERPPALPLPLPGG), and 273–295 (ELYQGTGPGGRRSGGGPGSGEAG). The segment covering 185-203 (SPELPSEGGAGSGLLLLPP) has biased composition (low complexity). Residues 234–243 (TQQTLTSQPD) show a composition bias toward polar residues. Residues 278–295 (TGPGGRRSGGGPGSGEAG) show a composition bias toward gly residues. Residue Arg284 is modified to Omega-N-methylarginine. 2 consecutive C2 domains span residues 299–420 (PCGR…PLWR) and 431–565 (DLGE…EHWH). Ca(2+)-binding residues include Asp330, Asp336, Asp388, Phe389, Asp390, Ser393, Asp396, Asp462, Asp468, Asp522, and Asp524.

Belongs to the synaptotagmin family. In terms of assembly, homodimer; disulfide-linked via the cysteine motif. Can also form heterodimers with SYT6, SYT9 and SYT10. Requires Ca(2+) as cofactor. Expressed in melanocytes.

The protein localises to the cell membrane. It is found in the cytoplasmic vesicle. It localises to the secretory vesicle membrane. Its function is as follows. Ca(2+) sensor involved in Ca(2+)-dependent exocytosis of secretory vesicles through Ca(2+) and phospholipid binding to the C2 domain. Ca(2+) induces binding of the C2-domains to phospholipid membranes and to assembled SNARE-complexes; both actions contribute to triggering exocytosis. Plays a role in dendrite formation by melanocytes. The polypeptide is Synaptotagmin-3 (SYT3) (Homo sapiens (Human)).